The following is a 102-amino-acid chain: NADH-quinone oxidoreductase subunit K (102 aa).

A run of 3 helical transmembrane segments spans residues 5-25, 31-51, and 66-86; these read LEHY…GIFV, IVIL…MVAF, and FVLT…VVFF.

This sequence belongs to the complex I subunit 4L family. In terms of assembly, NDH-1 is composed of 14 different subunits. Subunits NuoA, H, J, K, L, M, N constitute the membrane sector of the complex.

It is found in the cellular chromatophore membrane. The enzyme catalyses a quinone + NADH + 5 H(+)(in) = a quinol + NAD(+) + 4 H(+)(out). NDH-1 shuttles electrons from NADH, via FMN and iron-sulfur (Fe-S) centers, to quinones in the respiratory chain. The immediate electron acceptor for the enzyme in this species is believed to be ubiquinone. Couples the redox reaction to proton translocation (for every two electrons transferred, four hydrogen ions are translocated across the cytoplasmic membrane), and thus conserves the redox energy in a proton gradient. This chain is NADH-quinone oxidoreductase subunit K, found in Rhodobacter capsulatus (Rhodopseudomonas capsulata).